The following is a 309-amino-acid chain: MLVDLDEILVSLKEGRHIPEETVYALCMDSQELLMNESNVARVDTPVTICGDIHGQLHDLLTLFEKSGGVEKTRYVFLGDFVDRGFYSLESFLLLLVYKLRYPDRITLIRGNHETRQITKVYGFYDEVMRKYGNSNVWRYCCEVFDYLSLGAIINDSIFCVHGGLSPDITTLNEIRAIDRKQEVPHEGGMCDLLWSDPDEVDTWSMSPRGAGFLFGKGEVDEFLHVNNVDLIARAHQLVMEGYKEMFDGGLVTVWSAPNYCYRCGNVAAVLKIEDNLERKYTIFEAVQAQNGVGNTIIPTKKAQMDYFL.

Mn(2+) is bound by residues Asp52, His54, Asp80, and Asn112. Residue His113 is the Proton donor of the active site. His162 and His236 together coordinate Mn(2+). Leu309 is modified (leucine methyl ester).

Belongs to the PPP phosphatase family. PP-4 (PP-X) subfamily. Catalytic subunit of the histone H2A phosphatase complex (HTP-C) containing PPH3, PSY2 and PSY4. Mn(2+) is required as a cofactor.

The protein resides in the cytoplasm. Its subcellular location is the nucleus. The catalysed reaction is O-phospho-L-seryl-[protein] + H2O = L-seryl-[protein] + phosphate. It carries out the reaction O-phospho-L-threonyl-[protein] + H2O = L-threonyl-[protein] + phosphate. In terms of biological role, forms the histone H2A phosphatase complex in association with the regulatory subunits PSY2 and PSY4, which dephosphorylates H2AS128ph (gamma-H2A) that has been displaced from sites of DNA lesions in the double-stranded DNA break repair process. Dephosphorylation is necessary for efficient recovery from the DNA damage checkpoint. In Candida glabrata (strain ATCC 2001 / BCRC 20586 / JCM 3761 / NBRC 0622 / NRRL Y-65 / CBS 138) (Yeast), this protein is Serine/threonine-protein phosphatase 4 catalytic subunit (PPH3).